We begin with the raw amino-acid sequence, 181 residues long: Ribosome-recycling factor (181 aa).

The tract at residues 135 to 160 (MDDIKKDKDMPEDDARKAEDQTQKLT) is disordered.

Belongs to the RRF family.

The protein resides in the cytoplasm. Functionally, responsible for the release of ribosomes from messenger RNA at the termination of protein biosynthesis. May increase the efficiency of translation by recycling ribosomes from one round of translation to another. This is Ribosome-recycling factor from Leuconostoc mesenteroides subsp. mesenteroides (strain ATCC 8293 / DSM 20343 / BCRC 11652 / CCM 1803 / JCM 6124 / NCDO 523 / NBRC 100496 / NCIMB 8023 / NCTC 12954 / NRRL B-1118 / 37Y).